Here is a 338-residue protein sequence, read N- to C-terminus: Tagatose 1,6-diphosphate aldolase (338 aa).

Belongs to the aldolase LacD family.

It catalyses the reaction D-tagatofuranose 1,6-bisphosphate = D-glyceraldehyde 3-phosphate + dihydroxyacetone phosphate. It functions in the pathway carbohydrate metabolism; D-tagatose 6-phosphate degradation; D-glyceraldehyde 3-phosphate and glycerone phosphate from D-tagatose 6-phosphate: step 2/2. The polypeptide is Tagatose 1,6-diphosphate aldolase (Listeria monocytogenes serotype 4b (strain CLIP80459)).